Consider the following 408-residue polypeptide: Phosphopentomutase (408 aa).

6 residues coordinate Mn(2+): aspartate 10, aspartate 307, histidine 312, aspartate 348, histidine 349, and histidine 360.

The protein belongs to the phosphopentomutase family. Mn(2+) is required as a cofactor.

It is found in the cytoplasm. It carries out the reaction 2-deoxy-alpha-D-ribose 1-phosphate = 2-deoxy-D-ribose 5-phosphate. The catalysed reaction is alpha-D-ribose 1-phosphate = D-ribose 5-phosphate. It participates in carbohydrate degradation; 2-deoxy-D-ribose 1-phosphate degradation; D-glyceraldehyde 3-phosphate and acetaldehyde from 2-deoxy-alpha-D-ribose 1-phosphate: step 1/2. Its function is as follows. Isomerase that catalyzes the conversion of deoxy-ribose 1-phosphate (dRib-1-P) and ribose 1-phosphate (Rib-1-P) to deoxy-ribose 5-phosphate (dRib-5-P) and ribose 5-phosphate (Rib-5-P), respectively. The sequence is that of Phosphopentomutase from Buchnera aphidicola subsp. Baizongia pistaciae (strain Bp).